The sequence spans 82 residues: Probable glutamyl-tRNA(Gln) amidotransferase subunit C (82 aa).

Belongs to the GatC family. As to quaternary structure, heterotrimer of A, B and C subunits.

The enzyme catalyses L-glutamyl-tRNA(Gln) + L-glutamine + ATP + H2O = L-glutaminyl-tRNA(Gln) + L-glutamate + ADP + phosphate + H(+). It catalyses the reaction L-aspartyl-tRNA(Asn) + L-glutamine + ATP + H2O = L-asparaginyl-tRNA(Asn) + L-glutamate + ADP + phosphate + 2 H(+). Allows the formation of correctly charged Asn-tRNA(Asn) or Gln-tRNA(Gln) through the transamidation of misacylated Asp-tRNA(Asn) or Glu-tRNA(Gln) in organisms which lack either or both of asparaginyl-tRNA or glutaminyl-tRNA synthetases. The reaction takes place in the presence of glutamine and ATP through an activated phospho-Asp-tRNA(Asn) or phospho-Glu-tRNA(Gln). The chain is Probable glutamyl-tRNA(Gln) amidotransferase subunit C from Methanocaldococcus jannaschii (strain ATCC 43067 / DSM 2661 / JAL-1 / JCM 10045 / NBRC 100440) (Methanococcus jannaschii).